We begin with the raw amino-acid sequence, 206 residues long: Small ribosomal subunit protein uS4 (206 aa).

Positions 94 to 156 constitute an S4 RNA-binding domain; that stretch reads RRLDNVVYRL…SRRRMYFKNL (63 aa).

Belongs to the universal ribosomal protein uS4 family. As to quaternary structure, part of the 30S ribosomal subunit. Contacts protein S5. The interaction surface between S4 and S5 is involved in control of translational fidelity.

One of the primary rRNA binding proteins, it binds directly to 16S rRNA where it nucleates assembly of the body of the 30S subunit. Functionally, with S5 and S12 plays an important role in translational accuracy. The sequence is that of Small ribosomal subunit protein uS4 from Roseiflexus castenholzii (strain DSM 13941 / HLO8).